A 215-amino-acid polypeptide reads, in one-letter code: Ribonuclease (215 aa).

Positions 1-22 (MKKIVVLLGMLLAPWFSSAVQA) are cleaved as a signal peptide. Active-site residues include His62, Glu102, and His106. A disordered region spans residues 144–166 (KPLPAQGGSGQCQRLAGPGQHHG).

This sequence belongs to the RNase T2 family.

It is found in the periplasm. It localises to the cytoplasm. In terms of biological role, one of the few RNases that cleave the phosphodiester bond between any two nucleotide. Shows a preference for adenylic acid. In Aeromonas hydrophila, this protein is Ribonuclease.